We begin with the raw amino-acid sequence, 188 residues long: V-type ATP synthase subunit E (188 aa).

The protein belongs to the V-ATPase E subunit family.

In terms of biological role, produces ATP from ADP in the presence of a proton gradient across the membrane. The protein is V-type ATP synthase subunit E of Thermus thermophilus (strain ATCC BAA-163 / DSM 7039 / HB27).